The following is a 330-amino-acid chain: Ketol-acid reductoisomerase (NADP(+)) (330 aa).

The 181-residue stretch at 2 to 182 folds into the KARI N-terminal Rossmann domain; it reads VKIFYDKDVT…GLTKVGVIQT (181 aa). NADP(+)-binding positions include 25–28, R48, S53, and 83–86; these read YGSQ and DEVQ. H108 is an active-site residue. Position 134 (G134) interacts with NADP(+). Residues 183–328 form the KARI C-terminal knotted domain; the sequence is TFREETETDL…KELRKMCGLE (146 aa). Mg(2+)-binding residues include D191, E195, E227, and E231. S252 serves as a coordination point for substrate.

This sequence belongs to the ketol-acid reductoisomerase family. Requires Mg(2+) as cofactor.

It carries out the reaction (2R)-2,3-dihydroxy-3-methylbutanoate + NADP(+) = (2S)-2-acetolactate + NADPH + H(+). The catalysed reaction is (2R,3R)-2,3-dihydroxy-3-methylpentanoate + NADP(+) = (S)-2-ethyl-2-hydroxy-3-oxobutanoate + NADPH + H(+). Its pathway is amino-acid biosynthesis; L-isoleucine biosynthesis; L-isoleucine from 2-oxobutanoate: step 2/4. It participates in amino-acid biosynthesis; L-valine biosynthesis; L-valine from pyruvate: step 2/4. Its function is as follows. Involved in the biosynthesis of branched-chain amino acids (BCAA). Catalyzes an alkyl-migration followed by a ketol-acid reduction of (S)-2-acetolactate (S2AL) to yield (R)-2,3-dihydroxy-isovalerate. In the isomerase reaction, S2AL is rearranged via a Mg-dependent methyl migration to produce 3-hydroxy-3-methyl-2-ketobutyrate (HMKB). In the reductase reaction, this 2-ketoacid undergoes a metal-dependent reduction by NADPH to yield (R)-2,3-dihydroxy-isovalerate. This chain is Ketol-acid reductoisomerase (NADP(+)), found in Methanocaldococcus jannaschii (strain ATCC 43067 / DSM 2661 / JAL-1 / JCM 10045 / NBRC 100440) (Methanococcus jannaschii).